A 1178-amino-acid chain; its full sequence is DNA-directed RNA polymerase subunit beta' (1178 aa).

Residues Cys-60, Cys-62, Cys-75, and Cys-78 each coordinate Zn(2+). Mg(2+) is bound by residues Asp-450, Asp-452, and Asp-454. Residues Cys-795, Cys-869, Cys-876, and Cys-879 each coordinate Zn(2+).

It belongs to the RNA polymerase beta' chain family. In terms of assembly, the RNAP catalytic core consists of 2 alpha, 1 beta, 1 beta' and 1 omega subunit. When a sigma factor is associated with the core the holoenzyme is formed, which can initiate transcription. The cofactor is Mg(2+). Zn(2+) serves as cofactor.

It catalyses the reaction RNA(n) + a ribonucleoside 5'-triphosphate = RNA(n+1) + diphosphate. DNA-dependent RNA polymerase catalyzes the transcription of DNA into RNA using the four ribonucleoside triphosphates as substrates. The sequence is that of DNA-directed RNA polymerase subunit beta' from Clostridium beijerinckii (strain ATCC 51743 / NCIMB 8052) (Clostridium acetobutylicum).